Consider the following 387-residue polypeptide: Putative transmembrane protein At3g54730 (387 aa).

Over residues 10–25 the composition is skewed to pro residues; the sequence is PAPPLLLPSPNPPPCA. The disordered stretch occupies residues 10 to 45; sequence PAPPLLLPSPNPPPCALPQDLTSLVSPSEPPDPPDP. 8 helical membrane-spanning segments follow: residues 97 to 117, 128 to 148, 154 to 174, 186 to 206, 221 to 241, 292 to 312, 335 to 355, and 362 to 382; these read VFPL…HPLV, GSNF…ILQF, VMIS…MILL, VLFS…VGLI, IQKL…FLEI, SWCF…YPLE, FSTI…FIFF, and PFVA…LNHF.

The protein localises to the membrane. The protein is Putative transmembrane protein At3g54730 of Arabidopsis thaliana (Mouse-ear cress).